Consider the following 98-residue polypeptide: MLEQRNPAEALTVSVLNSQSQVTNKPLRDSVKQALRNYLSQLDGQDVNDLYELVLAEVEHPMLDMIMQYTRGNQTRAATMLGINRGTLRKKLKKYGMG.

A DNA-binding region (H-T-H motif) is located at residues Q74–K93.

The protein belongs to the transcriptional regulatory Fis family. In terms of assembly, homodimer.

In terms of biological role, activates ribosomal RNA transcription. Plays a direct role in upstream activation of rRNA promoters. This chain is DNA-binding protein Fis, found in Histophilus somni (strain 2336) (Haemophilus somnus).